The chain runs to 1268 residues: MTAADHPAFGRDEEAALLLERTHHRHDPRWLLPVSPHVCMACALELLPEPGVSLVRKKHVVFCFQDALVRHTSLVAQLVAQDQRVCIHFVRVLFGLLNSVEDGSMADLCIEVLVQLTTQPNMEQTIRCLMNECHRELCNLRSMGGSLATTTLLGKLVDTIPGLADELVMEHGNLMEHLLRGLVYPNEGVQASICYLYGKLYSSPTAAEMLSGHFREKLCALFLSTLDSAQTKDLQINCLGLLRQLLKYDLFVSLIMNKSVPVEGAESVERPSRETSLPLVLKKFLLSRDEILQVASSHCITAVLVHSPAKHAVAFIHADIPEFLFEHLSSSSEILVWSSYNCLILLAEEPLFFSKCHTVYGIEAVVRSLQGSQQMTNTELHTQGLLLFKEILTRQPEEIRLFTSSALCRDASRALQEAVSSPVLAVAAEALRAISAFLRKDHQSSLPVQYRALRALLEAMLSRCMEFSQTPLNRRSLGHACSRNSEKATLRKGSFLLSTLEGFRNACRLAVEFQGEPSAQENPFTAPSAEKEDTLEAFSEYLLSACDSQCIPMVMRYSEEATHPKLMEVFLSILHSLFVIIPHMKVKFSRKLADSSFIRLTLELKARFCSGQSHSSLNQVCSSFLYYMCLNLLSAPEKTEPLSQEELSAVSEFLQHGLPHISSRTPESLAFLSDRQYVEAATRQRQYCILLLFYLAHIHDDRFVPEAELFVAVQSFLLSLQDQGECPPPVVCKASMYLLAVCGDKDSALAEAVISAIRKFLEGIPDLRGVYTHHPLLLRFFLAYPGLMSRFGHRVLELWFSWEESGYENLDDDSSPGRTVFPANLAALFRVLQSTPSILLILLDLVYSSPVDTARKVLIVLRVFLWENEDVKVGGLIRGHFLLILQRLLVEYGASTSGGNLPLLLNLLSLVQMRNESEQELDSMAMKLLHQVSMLCGKCSPAHVDILQPSFNFLYWSLHQTTPSSQKRAAAVLLSSTALLELLEKMLALTWTETGSSPRTPLLSSAWLLTASFSAQQHNGNLQVHRTLSVELNQVLKALSFPKKMSALLSAAILRFLRTALQQSFSSALVVLVPSGDQPLSTPEDAVLAPLGKSQVLALLIGLQNLLVQKDPLLSQACIGCLEALLDYLHARSPDIALHVASQPWNRFLLFTLLDAGENSFLRPEILRLMTLFVQYRSSCVLSREEVGLILQGAALVDLSALSNDTLQALHGFLLQVQSMGLLNDQHMTQTLQSSLEGLCSRTFPAQPLFQDMLCLGGVSVSQAHIRG.

In terms of tissue distribution, strongly expressed in testis, weakly in brain, and not detected in spleen, liver, kidney, small intestine or colon.

Required for normal meiotic chromosome synapsis. May be involved in the formation of meiotic double-strand breaks (DSBs) in spermatocytes. The chain is Meiosis inhibitor protein 1 from Mus musculus (Mouse).